Here is a 186-residue protein sequence, read N- to C-terminus: Ribosome-recycling factor (186 aa).

Belongs to the RRF family.

The protein localises to the cytoplasm. Its function is as follows. Responsible for the release of ribosomes from messenger RNA at the termination of protein biosynthesis. May increase the efficiency of translation by recycling ribosomes from one round of translation to another. The sequence is that of Ribosome-recycling factor from Maricaulis maris (strain MCS10) (Caulobacter maris).